The chain runs to 576 residues: Flagellin B (576 aa).

It belongs to the bacterial flagellin family. In terms of assembly, heteromer of FlaA and FlaB. Interacts with FliW. Interacts with FliS.

The protein localises to the secreted. The protein resides in the bacterial flagellum. Its function is as follows. Flagellin is the subunit protein which polymerizes to form the filaments of bacterial flagella. The polypeptide is Flagellin B (flaB) (Campylobacter jejuni subsp. jejuni serotype O:6 (strain 81116 / NCTC 11828)).